We begin with the raw amino-acid sequence, 314 residues long: Secreted frizzled-related protein 5 (314 aa).

Residues 1 to 21 (MWVAWSARTAALALLLGALHG) form the signal peptide. Positions 45–162 (SKPPQCLDIP…PLDNDLCIAV (118 aa)) constitute an FZ domain. 8 disulfide bridges follow: Cys-50–Cys-113, Cys-60–Cys-106, Cys-97–Cys-132, Cys-121–Cys-159, Cys-125–Cys-149, Cys-178–Cys-250, Cys-181–Cys-252, and Cys-195–Cys-300. The 123-residue stretch at 178–300 (CAQCEMEHSA…AVKFMFSYPC (123 aa)) folds into the NTR domain.

It belongs to the secreted frizzled-related protein (sFRP) family.

The protein resides in the secreted. Soluble frizzled-related proteins (sFRPS) function as modulators of Wnt signaling through direct interaction with Wnts. They have a role in regulating cell growth and differentiation in specific cell types. SFRP5 may be involved in determining the polarity of photoreceptor, and perhaps, other cells in the retina. In Mus musculus (Mouse), this protein is Secreted frizzled-related protein 5 (Sfrp5).